Here is a 764-residue protein sequence, read N- to C-terminus: Phosphoribosylformylglycinamidine synthase subunit PurL (764 aa).

Residue His57 is part of the active site. Residues Tyr60 and Lys104 each contribute to the ATP site. Glu106 contributes to the Mg(2+) binding site. Substrate contacts are provided by residues 107-110 and Arg129; that span reads SHNH. The active-site Proton acceptor is His108. Asp130 contributes to the Mg(2+) binding site. Gln258 contacts substrate. Asp286 lines the Mg(2+) pocket. 330–332 serves as a coordination point for substrate; that stretch reads ESQ. Residues Asn518 and Gly555 each contribute to the ATP site. A Mg(2+)-binding site is contributed by Asn556. Residue Ser558 participates in substrate binding.

This sequence belongs to the FGAMS family. In terms of assembly, monomer. Part of the FGAM synthase complex composed of 1 PurL, 1 PurQ and 2 PurS subunits.

It localises to the cytoplasm. It catalyses the reaction N(2)-formyl-N(1)-(5-phospho-beta-D-ribosyl)glycinamide + L-glutamine + ATP + H2O = 2-formamido-N(1)-(5-O-phospho-beta-D-ribosyl)acetamidine + L-glutamate + ADP + phosphate + H(+). It participates in purine metabolism; IMP biosynthesis via de novo pathway; 5-amino-1-(5-phospho-D-ribosyl)imidazole from N(2)-formyl-N(1)-(5-phospho-D-ribosyl)glycinamide: step 1/2. Functionally, part of the phosphoribosylformylglycinamidine synthase complex involved in the purines biosynthetic pathway. Catalyzes the ATP-dependent conversion of formylglycinamide ribonucleotide (FGAR) and glutamine to yield formylglycinamidine ribonucleotide (FGAM) and glutamate. The FGAM synthase complex is composed of three subunits. PurQ produces an ammonia molecule by converting glutamine to glutamate. PurL transfers the ammonia molecule to FGAR to form FGAM in an ATP-dependent manner. PurS interacts with PurQ and PurL and is thought to assist in the transfer of the ammonia molecule from PurQ to PurL. The sequence is that of Phosphoribosylformylglycinamidine synthase subunit PurL from Nocardia farcinica (strain IFM 10152).